The chain runs to 142 residues: Large ribosomal subunit protein uL11 (142 aa).

It belongs to the universal ribosomal protein uL11 family. As to quaternary structure, part of the ribosomal stalk of the 50S ribosomal subunit. Interacts with L10 and the large rRNA to form the base of the stalk. L10 forms an elongated spine to which L12 dimers bind in a sequential fashion forming a multimeric L10(L12)X complex. In terms of processing, one or more lysine residues are methylated.

Forms part of the ribosomal stalk which helps the ribosome interact with GTP-bound translation factors. The polypeptide is Large ribosomal subunit protein uL11 (Proteus mirabilis (strain HI4320)).